Here is a 233-residue protein sequence, read N- to C-terminus: Uracil-DNA glycosylase (233 aa).

The active-site Proton acceptor is Asp-70.

It belongs to the uracil-DNA glycosylase (UDG) superfamily. UNG family.

Its subcellular location is the cytoplasm. It catalyses the reaction Hydrolyzes single-stranded DNA or mismatched double-stranded DNA and polynucleotides, releasing free uracil.. In terms of biological role, excises uracil residues from the DNA which can arise as a result of misincorporation of dUMP residues by DNA polymerase or due to deamination of cytosine. In Oleidesulfovibrio alaskensis (strain ATCC BAA-1058 / DSM 17464 / G20) (Desulfovibrio alaskensis), this protein is Uracil-DNA glycosylase.